The chain runs to 135 residues: Large ribosomal subunit protein bL17 (135 aa).

This sequence belongs to the bacterial ribosomal protein bL17 family. Part of the 50S ribosomal subunit. Contacts protein L32.

The protein is Large ribosomal subunit protein bL17 of Listeria welshimeri serovar 6b (strain ATCC 35897 / DSM 20650 / CCUG 15529 / CIP 8149 / NCTC 11857 / SLCC 5334 / V8).